The chain runs to 989 residues: MTMAGGRRGLVAPQNTFLENIVRRSNDTNFVLGNAQIVDWPIVYSNDGFCKLSGYHRAEVMQKSSACSFMYGELTDKDTVEKVRQTFENYEMNSFEILMYKKNRTPVWFFVKIAPIRNEQDKVVLFLCTFSDITAFKQPIEDDSCKGWGKFARLTRALTSSRGVLQQLAPSVQKGENVHKHSRLAEVLQLGSDILPQYKQEAPKTPPHIILHYCVFKTTWDWIILILTFYTAILVPYNVSFKTRQNNVAWLVVDSIVDVIFLVDIVLNFHTTFVGPAGEVISDPKLIRMNYLKTWFVIDLLSCLPYDVINAFENVDEVSAFMGDPGKIGFADQIPPPLEGRESQGISSLFSSLKVVRLLRLGRVARKLDHYIEYGAAVLVLLVCVFGLAAHWMACIWYSIGDYEIFDEDTKTIRNNSWLYQLALDIGTPYQFNGSGSGKWEGGPSKNSVYISSLYFTMTSLTSVGFGNIAPSTDIEKIFAVAIMMIGSLLYATIFGNVTTIFQQMYANTNRYHEMLNSVRDFLKLYQVPKGLSERVMDYIVSTWSMSRGIDTEKVLQICPKDMRADICVHLNRKVFKEHPAFRLASDGCLRALAMEFQTVHCAPGDLIYHAGESVDSLCFVVSGSLEVIQDDEVVAILGKGDVFGDVFWKEATLAQSCANVRALTYCDLHVIKRDALQKVLEFYTAFSHSFSRNLILTYNLRKRIVFRKISDVKREEEERMKRKNEAPLILPPDHPVRRLFQRFRQQKEARLAAERGGRDLDDLDVEKGNALTDHTSANHSLVKASVVTVRESPATPVSFQAATTSTVSDHAKLHAPGSECLGPKAVSCDPAKRKGWARFKDACGKGEDWNKVSKAESMETLPERTKAPGEATLKKTDSCDSGITKSDLRLDNVGETRSPQDRSPILAEVKHSFYPIPEQTLQATVLEVKYELKEDIKALNAKMTSIEKQLSEILRILMSRGSAQSPQETGEISRPQSPESDRDIFGAS.

Topologically, residues 1-220 (MTMAGGRRGL…LHYCVFKTTW (220 aa)) are cytoplasmic. Residues 14-94 (QNTFLENIVR…QTFENYEMNS (81 aa)) enclose the PAS domain. In terms of domain architecture, PAC spans 93–145 (NSFEILMYKKNRTPVWFFVKIAPIRNEQDKVVLFLCTFSDITAFKQPIEDDSC). Positions 151–162 (FARLTRALTSSR) are required for phosphatidylinositol bisphosphate binding. A helical membrane pass occupies residues 221–241 (DWIILILTFYTAILVPYNVSF). Over 242 to 248 (KTRQNNV) the chain is Extracellular. The chain crosses the membrane as a helical span at residues 249 to 269 (AWLVVDSIVDVIFLVDIVLNF). The Cytoplasmic segment spans residues 270-290 (HTTFVGPAGEVISDPKLIRMN). Residues 291–309 (YLKTWFVIDLLSCLPYDVI) form a helical membrane-spanning segment. Residues 310–345 (NAFENVDEVSAFMGDPGKIGFADQIPPPLEGRESQG) lie on the Extracellular side of the membrane. The helical; Voltage-sensor transmembrane segment at 346-368 (ISSLFSSLKVVRLLRLGRVARKL) threads the bilayer. The Cytoplasmic segment spans residues 369–377 (DHYIEYGAA). Residues 378 to 399 (VLVLLVCVFGLAAHWMACIWYS) traverse the membrane as a helical segment. At 400–448 (IGDYEIFDEDTKTIRNNSWLYQLALDIGTPYQFNGSGSGKWEGGPSKNS) the chain is on the extracellular side. 2 N-linked (GlcNAc...) asparagine glycosylation sites follow: N415 and N433. Positions 449 to 470 (VYISSLYFTMTSLTSVGFGNIA) form an intramembrane region, pore-forming. A Selectivity filter motif is present at residues 463–468 (SVGFGN). Residues 471-477 (PSTDIEK) lie on the Extracellular side of the membrane. A helical transmembrane segment spans residues 478–498 (IFAVAIMMIGSLLYATIFGNV). Residues 499 to 989 (TTIFQQMYAN…ESDRDIFGAS (491 aa)) are Cytoplasmic-facing. Positions 673 to 770 (KRDALQKVLE…LDDLDVEKGN (98 aa)) are calmodulin-binding. Residues 699–701 (YNL) are interaction with cyclic nucleotide-binding pocket. 2 stretches are compositionally biased toward basic and acidic residues: residues 857–879 (ESME…KTDS) and 887–901 (SDLR…RSPQ). 2 disordered regions span residues 857-905 (ESME…DRSP) and 961-989 (RGSA…FGAS). The tract at residues 924-964 (ATVLEVKYELKEDIKALNAKMTSIEKQLSEILRILMSRGSA) is CAD (involved in subunit assembly). Over residues 962–979 (GSAQSPQETGEISRPQSP) the composition is skewed to polar residues. Phosphoserine occurs at positions 974, 978, and 981. Over residues 980–989 (ESDRDIFGAS) the composition is skewed to basic and acidic residues.

This sequence belongs to the potassium channel family. H (Eag) (TC 1.A.1.20) subfamily. Kv10.1/KCNH1 sub-subfamily. Homomultimer. The potassium channel is composed of a homo- or heterotetrameric complex of pore-forming alpha subunits that can associate with modulating beta subunits. Heteromultimer with KCNH5/EAG2. Interacts with ALG10B. Interacts with RABEP1. Interacts (via C-terminus) with CTTN. Interacts (via C-terminal cytoplasmic region) with Ca(2+)-bound calmodulin. Channel activity is regulated via tyrosine phosphorylation/dephosphorylation by SRC and PTPN6. As to expression, detected in brain (at protein level). Highly expressed in olfactory bulb. Detected in brain cortex, hippocampus, brain stem, striatum, thalamus, hypothalamus and spinal cord.

Its subcellular location is the cell membrane. The protein resides in the nucleus inner membrane. It localises to the cell projection. The protein localises to the dendrite. It is found in the axon. Its subcellular location is the presynaptic cell membrane. The protein resides in the perikaryon. It localises to the postsynaptic density membrane. The protein localises to the early endosome membrane. The enzyme catalyses K(+)(in) = K(+)(out). Channel activity is inhibited by interaction with Ca(2+)-bound calmodulin. Interaction of a single pore-forming alpha subunit with a calmodulin chain is sufficient to promote channel closure. Channel activity is not regulated by cyclic nucleotides. Channel activity is inhibited by binding intracellular phosphatidylinositol-3,5-bisphosphate and phosphatidylinositol-4,5-bisphosphate (PIP2), but is not inhibited by phosphatidylinositol 4-phosphate. In terms of biological role, pore-forming (alpha) subunit of a voltage-gated delayed rectifier potassium channel that mediates outward-rectifying potassium currents which, on depolarization, reaches a steady-state level and do not inactivate. The activation kinetics depend on the prepulse potential and external divalent cation concentration. With negative prepulses, the current activation is delayed and slowed down several fold, whereas more positive prepulses speed up activation. The time course of activation is biphasic with a fast and a slowly activating current component. Activates at more positive membrane potentials and exhibit a steeper activation curve. Channel properties are modulated by subunit assembly. Mediates IK(NI) current in myoblasts. Involved in the regulation of cell proliferation and differentiation, in particular adipogenic and osteogenic differentiation in bone marrow-derived mesenchymal stem cells (MSCs). This is Voltage-gated delayed rectifier potassium channel KCNH1 from Mus musculus (Mouse).